We begin with the raw amino-acid sequence, 223 residues long: Endonuclease NucS (223 aa).

Belongs to the NucS endonuclease family.

It is found in the cytoplasm. Cleaves both 3' and 5' ssDNA extremities of branched DNA structures. The protein is Endonuclease NucS of Mycobacterium sp. (strain JLS).